The chain runs to 147 residues: Hemoglobin subunit beta (147 aa).

A Globin domain is found at L3–H147. T13 carries the phosphothreonine modification. S45 bears the Phosphoserine mark. At K60 the chain carries N6-acetyllysine. Residue H64 coordinates heme b. An N6-acetyllysine modification is found at K83. H93 provides a ligand contact to heme b. An S-nitrosocysteine modification is found at C94. At K145 the chain carries N6-acetyllysine.

It belongs to the globin family. In terms of assembly, heterotetramer of two alpha chains and two beta chains. As to expression, red blood cells.

In terms of biological role, involved in oxygen transport from the lung to the various peripheral tissues. The chain is Hemoglobin subunit beta (HBB) from Eulemur fulvus fulvus (Brown lemur).